Reading from the N-terminus, the 240-residue chain is DNA repair protein RecO (240 aa).

This sequence belongs to the RecO family.

Functionally, involved in DNA repair and RecF pathway recombination. This chain is DNA repair protein RecO, found in Xanthomonas oryzae pv. oryzae (strain MAFF 311018).